We begin with the raw amino-acid sequence, 291 residues long: Taste receptor type 2 member 16 (291 aa).

Residue methionine 1 is a topological domain, extracellular. A helical transmembrane segment spans residues 2 to 22 (IPIQLTVFFMIIYVLESLTII). Residues 23 to 41 (VQSSLIVAVLGREWLQVRR) are Cytoplasmic-facing. A helical transmembrane segment spans residues 42–62 (LMPVDMILISLGISRFCLQWA). At 63–84 (SMLNNFCSYFNLNYVLCNLTIT) the chain is on the extracellular side. Asparagine 80 carries an N-linked (GlcNAc...) asparagine glycan. The helical transmembrane segment at 85–105 (WEFFNILTFWLNSLLTVFYCI) threads the bilayer. Over 106–125 (KVSSFTHHIFLWLRWRILRL) the chain is Cytoplasmic. The helical transmembrane segment at 126–146 (FPWILLGSLMITCVTIIPSAI) threads the bilayer. Residues 147 to 182 (GNYIQIQLLTMEHLPRNSTVTDKLEKFHQYQFQAHT) are Extracellular-facing. A glycan (N-linked (GlcNAc...) asparagine) is linked at asparagine 163. A helical transmembrane segment spans residues 183–203 (VALVIPFILFLASTILLMASL). At 204–228 (TKQIQHHSTGHCNPSMKAHFTALRS) the chain is on the cytoplasmic side. The chain crosses the membrane as a helical span at residues 229–249 (LAVLFIVFTSYFLTILITIIG). Topologically, residues 250-257 (TLFDKRCW) are extracellular. A helical transmembrane segment spans residues 258 to 278 (LWVWEAFVYAFILMHSTSLML). Topologically, residues 279 to 291 (SSPTLKRILKGKC) are cytoplasmic.

The protein belongs to the G-protein coupled receptor T2R family. As to quaternary structure, interacts with RTP3 and RTP4.

Its subcellular location is the cell membrane. Receptor that may play a role in the perception of bitterness and is gustducin-linked. May play a role in sensing the chemical composition of the gastrointestinal content. The activity of this receptor may stimulate alpha gustducin, mediate PLC-beta-2 activation and lead to the gating of TRPM5. The chain is Taste receptor type 2 member 16 (TAS2R16) from Pan troglodytes (Chimpanzee).